We begin with the raw amino-acid sequence, 300 residues long: Ornithine carbamoyltransferase (300 aa).

Carbamoyl phosphate-binding positions include 50-53, Q77, R101, and 128-131; these read STRT and HPCQ. Residues N159, D219, and 223–224 contribute to the L-ornithine site; that span reads SM. Carbamoyl phosphate-binding positions include 257–258 and R285; that span reads CL.

It belongs to the aspartate/ornithine carbamoyltransferase superfamily. OTCase family.

It localises to the cytoplasm. It catalyses the reaction carbamoyl phosphate + L-ornithine = L-citrulline + phosphate + H(+). It participates in amino-acid degradation; L-arginine degradation via ADI pathway; carbamoyl phosphate from L-arginine: step 2/2. Functionally, reversibly catalyzes the transfer of the carbamoyl group from carbamoyl phosphate (CP) to the N(epsilon) atom of ornithine (ORN) to produce L-citrulline. In Haloquadratum walsbyi (strain DSM 16790 / HBSQ001), this protein is Ornithine carbamoyltransferase.